The sequence spans 224 residues: Peptidyl-tRNA hydrolase (224 aa).

Y27 contacts tRNA. Catalysis depends on H32, which acts as the Proton acceptor. Positions 78, 80, and 126 each coordinate tRNA. The span at 203-215 (LSGPSSDLDGSNP) shows a compositional bias: low complexity. A disordered region spans residues 203 to 224 (LSGPSSDLDGSNPAPGHGEASS).

The protein belongs to the PTH family. Monomer.

Its subcellular location is the cytoplasm. It catalyses the reaction an N-acyl-L-alpha-aminoacyl-tRNA + H2O = an N-acyl-L-amino acid + a tRNA + H(+). Hydrolyzes ribosome-free peptidyl-tRNAs (with 1 or more amino acids incorporated), which drop off the ribosome during protein synthesis, or as a result of ribosome stalling. Its function is as follows. Catalyzes the release of premature peptidyl moieties from peptidyl-tRNA molecules trapped in stalled 50S ribosomal subunits, and thus maintains levels of free tRNAs and 50S ribosomes. This Synechococcus sp. (strain JA-2-3B'a(2-13)) (Cyanobacteria bacterium Yellowstone B-Prime) protein is Peptidyl-tRNA hydrolase.